The chain runs to 156 residues: MSRRSTTKKKLALPDPIYNSRLVNMLTVRILKEGKKHLAQRIIYNAFDIIKQRTGEDAILVFESAIKKVTPLVEVKARRIGGSTYQVPMEVRAFRGTNLALRWITKYARERAGKSMSMKLANEIMDAANETGSSIRKREEIHRMAEANKAFAHYRF.

It belongs to the universal ribosomal protein uS7 family. In terms of assembly, part of the 30S ribosomal subunit.

The protein resides in the plastid. It is found in the chloroplast. In terms of biological role, one of the primary rRNA binding proteins, it binds directly to 16S rRNA where it nucleates assembly of the head domain of the 30S subunit. In Guillardia theta (Cryptophyte), this protein is Small ribosomal subunit protein uS7c (rps7).